A 199-amino-acid chain; its full sequence is Imidazole glycerol phosphate synthase subunit HisH (199 aa).

The region spanning 2-199 (RAVIIDYGVG…LTNVYRWLRK (198 aa)) is the Glutamine amidotransferase type-1 domain. Cys-76 (nucleophile) is an active-site residue. Active-site residues include His-178 and Glu-180.

Heterodimer of HisH and HisF.

It localises to the cytoplasm. The enzyme catalyses 5-[(5-phospho-1-deoxy-D-ribulos-1-ylimino)methylamino]-1-(5-phospho-beta-D-ribosyl)imidazole-4-carboxamide + L-glutamine = D-erythro-1-(imidazol-4-yl)glycerol 3-phosphate + 5-amino-1-(5-phospho-beta-D-ribosyl)imidazole-4-carboxamide + L-glutamate + H(+). It carries out the reaction L-glutamine + H2O = L-glutamate + NH4(+). It participates in amino-acid biosynthesis; L-histidine biosynthesis; L-histidine from 5-phospho-alpha-D-ribose 1-diphosphate: step 5/9. IGPS catalyzes the conversion of PRFAR and glutamine to IGP, AICAR and glutamate. The HisH subunit catalyzes the hydrolysis of glutamine to glutamate and ammonia as part of the synthesis of IGP and AICAR. The resulting ammonia molecule is channeled to the active site of HisF. This chain is Imidazole glycerol phosphate synthase subunit HisH, found in Sulfolobus acidocaldarius (strain ATCC 33909 / DSM 639 / JCM 8929 / NBRC 15157 / NCIMB 11770).